Reading from the N-terminus, the 494-residue chain is Probable malate:quinone oxidoreductase 3 (494 aa).

The protein belongs to the MQO family. FAD serves as cofactor.

It catalyses the reaction (S)-malate + a quinone = a quinol + oxaloacetate. It participates in carbohydrate metabolism; tricarboxylic acid cycle; oxaloacetate from (S)-malate (quinone route): step 1/1. This is Probable malate:quinone oxidoreductase 3 from Staphylococcus epidermidis (strain ATCC 35984 / DSM 28319 / BCRC 17069 / CCUG 31568 / BM 3577 / RP62A).